Here is a 318-residue protein sequence, read N- to C-terminus: Taste receptor type 2 member 60 (318 aa).

At 1 to 7 (MNGDHMV) the chain is on the extracellular side. Residues 8 to 28 (LGSSMTDEKAIILVIILLLLC) form a helical membrane-spanning segment. Residues 29–40 (LVAIAGNCFITA) lie on the Cytoplasmic side of the membrane. Residues 41–61 (ALGMEWVLQRMLLPCDKLLVS) traverse the membrane as a helical segment. Residues 62-88 (LGASRFCPQWVVMGKTTYVFLYPTAFP) lie on the Extracellular side of the membrane. Residues 89–109 (YNPVLRFLAFQWDLLNAATLW) form a helical membrane-spanning segment. The Cytoplasmic segment spans residues 110–128 (FSTWLSVFYCVKIATFTHP). A helical membrane pass occupies residues 129 to 149 (VFLWLKHKLSEWVPWMLFSSV). The Extracellular segment spans residues 150 to 183 (GLSSFTTILFFIGNHRVYQSYLRNHLQPWNVTGN). The N-linked (GlcNAc...) asparagine glycan is linked to Asn179. A helical transmembrane segment spans residues 184-204 (SIWSYCEKFYLFPLKMITWTM). At 205–234 (PTAVFFICMILLITSLGRHMKKALLTNSGF) the chain is on the cytoplasmic side. The chain crosses the membrane as a helical span at residues 235–255 (RDPSVQAHIKAMLALLSFAML). The Extracellular segment spans residues 256-264 (FISYFLSLV). Residues 265–285 (FSAAGIFPPLDFKFWVWESVI) form a helical membrane-spanning segment. Over 286–318 (YLCAAVHPIILLFSNRRLRAVLKRCRSSRCGTP) the chain is Cytoplasmic.

Belongs to the G-protein coupled receptor T2R family.

It is found in the membrane. Functionally, receptor that may play a role in the perception of bitterness and is gustducin-linked. May play a role in sensing the chemical composition of the gastrointestinal content. The activity of this receptor may stimulate alpha gustducin, mediate PLC-beta-2 activation and lead to the gating of TRPM5. The sequence is that of Taste receptor type 2 member 60 (TAS2R60) from Pongo pygmaeus (Bornean orangutan).